Consider the following 383-residue polypeptide: Protein KES1 (383 aa).

The span at 317–339 (FETASKDKARIENAQRQKRKDEA) shows a compositional bias: basic and acidic residues. Residues 317 to 346 (FETASKDKARIENAQRQKRKDEAAAGTPHQ) are disordered.

The protein belongs to the OSBP family.

Functionally, lipid transporter involved in lipid countertransport between the Golgi complex and membranes of the endoplasmic reticulum: specifically exchanges sterol with phosphatidylinositol 4-phosphate (PI4P), delivering sterol to the Golgi in exchange for PI4P, which is degraded by the SAC1 phosphatase in the endoplasmic reticulum. This is Protein KES1 (KES1) from Mycosarcoma maydis (Corn smut fungus).